We begin with the raw amino-acid sequence, 529 residues long: BTB/POZ domain-containing protein 6 (529 aa).

Residues 127-197 (ADVHFIVGPA…LYSDEIDLEA (71 aa)) enclose the BTB domain.

As to quaternary structure, homodimer and heterodimer. Interacts with cul3 via the BTB domain.

It is found in the cytoplasm. In terms of biological role, adapter protein for the cul3 E3 ubiquitin-protein ligase complex. Involved in late neuronal development and muscle formation. In Xenopus laevis (African clawed frog), this protein is BTB/POZ domain-containing protein 6 (btbd6).